The sequence spans 64 residues: Large ribosomal subunit protein bL35 (64 aa).

Belongs to the bacterial ribosomal protein bL35 family.

In Acinetobacter baumannii (strain AB307-0294), this protein is Large ribosomal subunit protein bL35.